The primary structure comprises 149 residues: Ribonuclease H (149 aa).

One can recognise an RNase H type-1 domain in the interval 4–145 (QRGVVEAFTD…ADALANQGID (142 aa)). Positions 13, 51, 73, and 137 each coordinate Mg(2+).

The protein belongs to the RNase H family. In terms of assembly, monomer. The cofactor is Mg(2+).

Its subcellular location is the cytoplasm. The enzyme catalyses Endonucleolytic cleavage to 5'-phosphomonoester.. In terms of biological role, endonuclease that specifically degrades the RNA of RNA-DNA hybrids. This chain is Ribonuclease H, found in Halorhodospira halophila (strain DSM 244 / SL1) (Ectothiorhodospira halophila (strain DSM 244 / SL1)).